We begin with the raw amino-acid sequence, 1398 residues long: DNA-directed RNA polymerase subunit beta' (1398 aa).

4 residues coordinate Zn(2+): Cys-73, Cys-75, Cys-88, and Cys-91. Mg(2+) contacts are provided by Asp-464, Asp-466, and Asp-468. 4 residues coordinate Zn(2+): Cys-823, Cys-897, Cys-904, and Cys-907.

Belongs to the RNA polymerase beta' chain family. In terms of assembly, the RNAP catalytic core consists of 2 alpha, 1 beta, 1 beta' and 1 omega subunit. When a sigma factor is associated with the core the holoenzyme is formed, which can initiate transcription. Mg(2+) serves as cofactor. The cofactor is Zn(2+).

It catalyses the reaction RNA(n) + a ribonucleoside 5'-triphosphate = RNA(n+1) + diphosphate. In terms of biological role, DNA-dependent RNA polymerase catalyzes the transcription of DNA into RNA using the four ribonucleoside triphosphates as substrates. The chain is DNA-directed RNA polymerase subunit beta' from Gluconacetobacter diazotrophicus (strain ATCC 49037 / DSM 5601 / CCUG 37298 / CIP 103539 / LMG 7603 / PAl5).